We begin with the raw amino-acid sequence, 491 residues long: Probable malate:quinone oxidoreductase (491 aa).

Belongs to the MQO family. The cofactor is FAD.

It carries out the reaction (S)-malate + a quinone = a quinol + oxaloacetate. It participates in carbohydrate metabolism; tricarboxylic acid cycle; oxaloacetate from (S)-malate (quinone route): step 1/1. In Actinobacillus pleuropneumoniae serotype 5b (strain L20), this protein is Probable malate:quinone oxidoreductase.